The primary structure comprises 77 residues: UPF0270 protein Spro_4577 (77 aa).

It belongs to the UPF0270 family.

This is UPF0270 protein Spro_4577 from Serratia proteamaculans (strain 568).